The sequence spans 425 residues: Endoplasmic reticulum junction formation protein lunapark (425 aa).

The N-myristoyl glycine moiety is linked to residue Gly-2. Topologically, residues Gly-2–Arg-45 are cytoplasmic. A coiled-coil region spans residues Val-15–Leu-41. The chain crosses the membrane as a helical span at residues Leu-46–Leu-66. The Lumenal portion of the chain corresponds to Pro-67–Thr-77. A helical transmembrane segment spans residues Leu-78–Phe-98. Over Ser-99–Lys-425 the chain is Cytoplasmic. Residues Arg-101–Thr-128 are a coiled coil. A phosphoserine mark is found at Ser-114, Ser-153, Ser-177, Ser-182, and Ser-194. The segment at Lys-144–Pro-242 is disordered. Pro residues predominate over residues Gly-186 to Pro-195. The residue at position 211 (Thr-211) is a Phosphothreonine. Ser-222 is subject to Phosphoserine. The C4-type; plays a role in ER morphology zinc-finger motif lies at Cys-271 to Cys-296. Phosphoserine is present on residues Ser-316, Ser-348, and Ser-380. Positions Arg-320–Lys-425 are disordered. The span at Glu-384–Ser-398 shows a compositional bias: acidic residues. Ser-411 carries the phosphoserine modification.

It belongs to the lunapark family. As to quaternary structure, homodimer; homodimerization requires the C4-type zinc finger motif and decreases during mitosis in a phosphorylation-dependent manner. In terms of processing, myristoylated; myristoylation is necessary for the endoplasmic reticulum (ER) three-way ER tubular junction formation, but is not required neither for membrane translocation, membrane topology formation, nor for the specific localization to ER membranes. Post-translationally, phosphorylated. Phosphorylation occurs at Ser-177, Ser-182, Ser-222, Ser-316 and Ser-380 during interphase. Phosphorylation occurs at Ser-114, Ser-153, Ser-194, Thr-211 and Ser-348 during mitosis; these phosphorylations reduce both its homodimerization and the ER three-way tubular junction formation. Subject to proteasomal degradation following phosphorylation during mitosis. As to expression, expressed in most tissues at basal level, with reinforcement in distal limb buds, genital bud, and in parts of the central nervous system.

The protein resides in the endoplasmic reticulum membrane. Functionally, endoplasmic reticulum (ER)-shaping membrane protein that plays a role in determining ER morphology. Involved in the stabilization of nascent three-way ER tubular junctions within the ER network. May also play a role as a curvature-stabilizing protein within three-way ER tubular junction network. May be involved in limb and central nervous system development. This Mus musculus (Mouse) protein is Endoplasmic reticulum junction formation protein lunapark.